The sequence spans 601 residues: Oligoendopeptidase F, plasmid (601 aa).

Histidine 387 lines the Zn(2+) pocket. Glutamate 388 is a catalytic residue. Zn(2+) contacts are provided by histidine 391 and histidine 394.

Belongs to the peptidase M3B family. Zn(2+) is required as a cofactor.

Its function is as follows. Hydrolyzes peptides containing between 7 and 17 amino acids with a rather wide specificity. In Lactococcus lactis subsp. cremoris (Streptococcus cremoris), this protein is Oligoendopeptidase F, plasmid (pepF1).